The chain runs to 142 residues: Fusaric acid resistance protein FusB (142 aa).

The tract at residues 73–142 (AAPCSRKAST…ASCSPAIRPR (70 aa)) is disordered. The span at 81-142 (STGSPARSSG…ASCSPAIRPR (62 aa)) shows a compositional bias: low complexity.

Involved in the resistance (detoxification) of the fungal toxin fusaric acid. The chain is Fusaric acid resistance protein FusB (fusB) from Burkholderia cepacia (Pseudomonas cepacia).